Reading from the N-terminus, the 110-residue chain is UPF0145 protein (110 aa).

It belongs to the UPF0145 family.

The chain is UPF0145 protein from Listeria welshimeri.